The sequence spans 1651 residues: Protein Wiz (1651 aa).

The interval 1-79 (MEGSLAGSLA…TPDGRGPWEH (79 aa)) is disordered. Glycyl lysine isopeptide (Lys-Gly) (interchain with G-Cter in SUMO2) cross-links involve residues Ala11, Arg14, Asn29, Gly32, Gly39, Gly42, and Glu258. C2H2-type zinc fingers lie at residues 267 to 289 (FPCI…MSQH), 304 to 326 (LACG…RQLH), and 353 to 375 (LQCP…AKLH). A Glycyl lysine isopeptide (Lys-Gly) (interchain with G-Cter in SUMO2) cross-link involves residue Phe313. Residues 376 to 399 (MREPPGQTTKEPFGGSSGAGSPSP) are disordered. Residues 386–399 (EPFGGSSGAGSPSP) show a composition bias toward low complexity. The C2H2-type 4 zinc-finger motif lies at 416–439 (SACVFCGFPAPSESLLREHVRLVH). Residues 546–578 (LGRNKSTVHPQGLGERRRPWSEEEEEEEEEEDV) form a disordered region. The span at 567–578 (EEEEEEEEEEDV) shows a compositional bias: acidic residues. C2H2-type zinc fingers lie at residues 701 to 723 (RKCP…VRGH) and 769 to 791 (MRCD…ARAH). Residues 819–843 (AEQPPSPLGREPGGPPGSFLTSRRP) form a disordered region. The C2H2-type 7 zinc finger occupies 870-892 (TTCEVCGACFETRKGLSSHARSH). Residues Lys883, Lys939, Lys955, Lys967, and Lys988 each participate in a glycyl lysine isopeptide (Lys-Gly) (interchain with G-Cter in SUMO2) cross-link. A disordered region spans residues 972 to 1038 (FSAKGLGHPP…GPLNLTSGPE (67 aa)). Residues 984-994 (PLLKKTPLALA) are compositionally biased toward low complexity. Ser996 carries the post-translational modification Phosphoserine. A Phosphothreonine modification is found at Thr998. Residues Lys1000 and Lys1005 each participate in a glycyl lysine isopeptide (Lys-Gly) (interchain with G-Cter in SUMO2) cross-link. Ser1006, Ser1012, Ser1017, and Ser1025 each carry phosphoserine. Residues 1030 to 1034 (PLNLT) form an interaction with CTBP1 and CTBP2 1 region. Residues 1043–1065 (IRCEFCGEFFENRKGLSSHARSH) form a C2H2-type 8 zinc finger. Lys1056 participates in a covalent cross-link: Glycyl lysine isopeptide (Lys-Gly) (interchain with G-Cter in SUMO2). Residues Ser1079 and Ser1106 each carry the phosphoserine modification. The segment at 1091-1174 (RTQSRPGGPP…PGLAAPSLPK (84 aa)) is disordered. The segment covering 1097–1106 (GGPPNPPGPS) has biased composition (pro residues). Residues Lys1108 and Lys1112 each participate in a glycyl lysine isopeptide (Lys-Gly) (interchain with G-Cter in SUMO2) cross-link. Ser1122, Ser1127, and Ser1134 each carry phosphoserine. Glycyl lysine isopeptide (Lys-Gly) (interchain with G-Cter in SUMO2) cross-links involve residues Lys1138 and Lys1139. A phosphoserine mark is found at Ser1146 and Ser1151. N6,N6,N6-trimethyllysine; by EHMT2; alternate is present on Lys1162. Lys1162 carries the post-translational modification N6,N6-dimethyllysine; by EHMT2; alternate. Lys1177 is covalently cross-linked (Glycyl lysine isopeptide (Lys-Gly) (interchain with G-Cter in SUMO2)). An interaction with CTBP1 and CTBP2 2 region spans residues 1214-1218 (PLNLS). Residues 1227–1249 (IRCEFCGEFFENRKGLSSHARSH) form a C2H2-type 9 zinc finger. Residue Lys1240 forms a Glycyl lysine isopeptide (Lys-Gly) (interchain with G-Cter in SUMO2) linkage. Ser1263 carries the post-translational modification Phosphoserine. A Glycyl lysine isopeptide (Lys-Gly) (interchain with G-Cter in SUMO2) cross-link involves residue Lys1282. The segment at 1283–1331 (KEPPAGDLAPALAEDGPPTVAPGPVQSPLPLSPLAGRPGKPGAGPAQVP) is disordered. Residues 1301 to 1313 (TVAPGPVQSPLPL) are compositionally biased toward pro residues. 2 positions are modified to phosphoserine: Ser1309 and Ser1314. The segment covering 1315 to 1328 (PLAGRPGKPGAGPA) has biased composition (low complexity). Residues Lys1343, Lys1356, Lys1370, Lys1372, and Lys1382 each participate in a glycyl lysine isopeptide (Lys-Gly) (interchain with G-Cter in SUMO2) cross-link. Residues 1397 to 1419 (ACCELCGLYFENRKALASHARAH) form a C2H2-type 10 zinc finger. Residues Lys1448, Lys1464, and Lys1477 each participate in a glycyl lysine isopeptide (Lys-Gly) (interchain with G-Cter in SUMO2) cross-link. Positions 1463–1554 (TKKFRSAGHG…ASAARGGEDT (92 aa)) are disordered. The residue at position 1480 (Ser1480) is a Phosphoserine. The span at 1481-1493 (LGLAPGGLAVVGR) shows a compositional bias: low complexity. Residue Ser1517 is modified to Phosphoserine. A Glycyl lysine isopeptide (Lys-Gly) (interchain with G-Cter in SUMO1); alternate cross-link involves residue Lys1523. Lys1523 participates in a covalent cross-link: Glycyl lysine isopeptide (Lys-Gly) (interchain with G-Cter in SUMO2); alternate. Residues 1523-1541 (KAEEHQRQNINKFERRQAR) are compositionally biased toward basic and acidic residues. Glycyl lysine isopeptide (Lys-Gly) (interchain with G-Cter in SUMO2) cross-links involve residues Lys1534 and Lys1560. The segment at 1596-1622 (LKCRFCEVEFQGPLSIQEEWVRHLQRH) adopts a C2H2-type 11 zinc-finger fold. The tract at residues 1629–1651 (SKADPPPEESQAPQAQTAAAEAP) is disordered. Lys1630 is covalently cross-linked (Glycyl lysine isopeptide (Lys-Gly) (interchain with G-Cter in SUMO2)). Over residues 1637 to 1651 (ESQAPQAQTAAAEAP) the composition is skewed to low complexity.

Belongs to the krueppel C2H2-type zinc-finger protein family. As to quaternary structure, interacts with EHMT1, EHMT2, CTBP1 and CTBP2. Part of a complex containing at least CDYL, REST, WIZ, SETB1, EHMT1 and EHMT2.

It is found in the nucleus. In terms of biological role, may link EHMT1 and EHMT2 histone methyltransferases to the CTBP corepressor machinery. May be involved in EHMT1-EHMT2 heterodimer formation and stabilization. This chain is Protein Wiz (WIZ), found in Homo sapiens (Human).